Reading from the N-terminus, the 138-residue chain is Transcription factor Atoh7-a (138 aa).

Residues 33–85 (KRRLAANARERRRMQGLNTAFDSLRKVVPQWGEDKQLSKYETLQMALSYIMAL) enclose the bHLH domain.

It localises to the nucleus. The protein resides in the perikaryon. Its subcellular location is the cell projection. The protein localises to the axon. Transcription factor that binds to DNA at the consensus sequence 5'-CAG[GC]TG-3'. Positively regulates the determination of retinal ganglion cell fate and formation of the optic nerve and retino-hypothalamic tract. Required for retinal circadian rhythm photoentrainment. Plays a role in brainstem auditory signaling and binaural processing. Regulates the differentiation of olfactory receptor neurons. During retinal neurogenesis, activates the transcription of several genes such as brn3d, coe3, cbfa2t2, glis2, elrC and xgadd45-gamma. This chain is Transcription factor Atoh7-a, found in Xenopus laevis (African clawed frog).